The primary structure comprises 108 residues: UPF0102 protein Sbal_4100 (108 aa).

This sequence belongs to the UPF0102 family.

This Shewanella baltica (strain OS155 / ATCC BAA-1091) protein is UPF0102 protein Sbal_4100.